Consider the following 112-residue polypeptide: Large ribosomal subunit protein uL24 (112 aa).

The protein belongs to the universal ribosomal protein uL24 family. Part of the 50S ribosomal subunit.

One of two assembly initiator proteins, it binds directly to the 5'-end of the 23S rRNA, where it nucleates assembly of the 50S subunit. Its function is as follows. One of the proteins that surrounds the polypeptide exit tunnel on the outside of the subunit. This is Large ribosomal subunit protein uL24 from Magnetococcus marinus (strain ATCC BAA-1437 / JCM 17883 / MC-1).